The sequence spans 287 residues: NAD kinase (287 aa).

The active-site Proton acceptor is the Asp66. NAD(+) contacts are provided by residues Asp66 to Gly67, Asn137 to Asp138, Arg148, Arg165, Asp167, and Thr178 to Ser183.

This sequence belongs to the NAD kinase family. A divalent metal cation serves as cofactor.

The protein localises to the cytoplasm. It carries out the reaction NAD(+) + ATP = ADP + NADP(+) + H(+). Its function is as follows. Involved in the regulation of the intracellular balance of NAD and NADP, and is a key enzyme in the biosynthesis of NADP. Catalyzes specifically the phosphorylation on 2'-hydroxyl of the adenosine moiety of NAD to yield NADP. In Chlorobium limicola (strain DSM 245 / NBRC 103803 / 6330), this protein is NAD kinase.